A 253-amino-acid polypeptide reads, in one-letter code: 5'-nucleotidase SurE (253 aa).

Residues Asp-8, Asp-9, Ser-39, and Asn-95 each contribute to the a divalent metal cation site.

This sequence belongs to the SurE nucleotidase family. Requires a divalent metal cation as cofactor.

It is found in the cytoplasm. It catalyses the reaction a ribonucleoside 5'-phosphate + H2O = a ribonucleoside + phosphate. In terms of biological role, nucleotidase that shows phosphatase activity on nucleoside 5'-monophosphates. The protein is 5'-nucleotidase SurE of Chloroflexus aggregans (strain MD-66 / DSM 9485).